Consider the following 142-residue polypeptide: Large ribosomal subunit protein uL13 (142 aa).

The protein belongs to the universal ribosomal protein uL13 family. In terms of assembly, part of the 50S ribosomal subunit.

Its function is as follows. This protein is one of the early assembly proteins of the 50S ribosomal subunit, although it is not seen to bind rRNA by itself. It is important during the early stages of 50S assembly. This is Large ribosomal subunit protein uL13 from Ectopseudomonas mendocina (strain ymp) (Pseudomonas mendocina).